Here is a 506-residue protein sequence, read N- to C-terminus: 2-isopropylmalate synthase (506 aa).

In terms of domain architecture, Pyruvate carboxyltransferase spans 4 to 266 (ILFMDTTLRD…QSSIILKEIK (263 aa)). Mn(2+) contacts are provided by D13, H201, H203, and N237. The tract at residues 390–506 (NIKQLQVHFV…KLKALLTLVK (117 aa)) is regulatory domain.

This sequence belongs to the alpha-IPM synthase/homocitrate synthase family. LeuA type 1 subfamily. As to quaternary structure, homodimer. Mn(2+) serves as cofactor.

It localises to the cytoplasm. It carries out the reaction 3-methyl-2-oxobutanoate + acetyl-CoA + H2O = (2S)-2-isopropylmalate + CoA + H(+). Its pathway is amino-acid biosynthesis; L-leucine biosynthesis; L-leucine from 3-methyl-2-oxobutanoate: step 1/4. In terms of biological role, catalyzes the condensation of the acetyl group of acetyl-CoA with 3-methyl-2-oxobutanoate (2-ketoisovalerate) to form 3-carboxy-3-hydroxy-4-methylpentanoate (2-isopropylmalate). The chain is 2-isopropylmalate synthase from Bacillus cytotoxicus (strain DSM 22905 / CIP 110041 / 391-98 / NVH 391-98).